The primary structure comprises 625 residues: MACYIYQLPSWVLDDLCRNMDALSEWDWMEFASYVITDLTQLRKIKSMERVQGVSITRELLWWWGMRQATVQQLVDLLCRLELYRAAQIILNWKPAPEIRCPIPAFPDSVKPEKPLAASVRKAEDEQEEGQPVRMATFPGPGSSPARAHQPAFLQPPEEDAPHSLRSDLPTSSDSKDFSTSIPKQEKLLSLAGDSLFWSEADVVQATDDFNQNRKISQGTFADVYRGHRHGKPFVFKKLRETACSSPGSIERFFQAELQICLRCCHPNVLPVLGFCAARQFHSFIYPYMANGSLQDRLQGQGGSDPLPWPQRVSICSGLLCAVEYLHGLEIIHSNVKSSNVLLDQNLTPKLAHPMAHLCPVNKRSKYTMMKTHLLRTSAAYLPEDFIRVGQLTKRVDIFSCGIVLAEVLTGIPAMDNNRSPVYLKDLLLSDIPSSTASLCSRKTGVENVMAKEICQKYLEKGAGRLPEDCAEALATAACLCLRRRNTSLQEVCGSVAAVEERLRGRETLLPWSGLSEGTGSSSNTPEETDDVDNSSLDASSSMSVAPWAGAATPLLPTENGEGRLRVIVGREADSSSEACVGLEPPQDVTETSWQIEINEAKRKLMENILLYKEEKVDSIELFGP.

A Death domain is found at 13-94 (LDDLCRNMDA…RAAQIILNWK (82 aa)). The interval 111 to 181 (KPEKPLAASV…SSDSKDFSTS (71 aa)) is disordered. The residue at position 144 (Ser-144) is a Phosphoserine. The span at 169-181 (LPTSSDSKDFSTS) shows a compositional bias: polar residues. The 280-residue stretch at 210–489 (FNQNRKISQG…LCLRRRNTSL (280 aa)) folds into the Protein kinase domain. ATP contacts are provided by residues 216–224 (ISQGTFADV), Lys-237, and 337–340 (KSSN). Residues 510-540 (LPWSGLSEGTGSSSNTPEETDDVDNSSLDAS) are disordered. The segment covering 516-526 (SEGTGSSSNTP) has biased composition (polar residues).

This sequence belongs to the protein kinase superfamily. TKL Ser/Thr protein kinase family. Pelle subfamily. Interacts with MYD88. IL-1 stimulation leads to the formation of a signaling complex which dissociates from the IL-1 receptor following the binding of PELI1. As to expression, expressed in spleen, thymus, prostate, lung, liver, skeletal muscle, kidney, pancreas and peripheral blood leukocytes.

Functionally, binds to the IL-1 type I receptor following IL-1 engagement, triggering intracellular signaling cascades leading to transcriptional up-regulation and mRNA stabilization. This Homo sapiens (Human) protein is Interleukin-1 receptor-associated kinase-like 2 (IRAK2).